Here is a 125-residue protein sequence, read N- to C-terminus: Monothiol glutaredoxin-S2 (125 aa).

Positions 28-124 (AERVGRLVRE…PRLREVGALC (97 aa)) constitute a Glutaredoxin domain. Cys48 serves as a coordination point for [2Fe-2S] cluster.

It belongs to the glutaredoxin family. CC-type subfamily.

The protein localises to the cytoplasm. Functionally, may only reduce GSH-thiol disulfides, but not protein disulfides. This chain is Monothiol glutaredoxin-S2 (GRXS2), found in Oryza sativa subsp. japonica (Rice).